A 269-amino-acid polypeptide reads, in one-letter code: 4-hydroxy-tetrahydrodipicolinate reductase (269 aa).

Residues 8–13 (GAAGRM) and E34 each bind NAD(+). Position 35 (R35) interacts with NADP(+). Residues 98 to 100 (GTT) and 122 to 125 (APNY) contribute to the NAD(+) site. H155 serves as the catalytic Proton donor/acceptor. H156 is a (S)-2,3,4,5-tetrahydrodipicolinate binding site. Catalysis depends on K159, which acts as the Proton donor. 165 to 166 (GT) provides a ligand contact to (S)-2,3,4,5-tetrahydrodipicolinate.

Belongs to the DapB family.

It localises to the cytoplasm. It catalyses the reaction (S)-2,3,4,5-tetrahydrodipicolinate + NAD(+) + H2O = (2S,4S)-4-hydroxy-2,3,4,5-tetrahydrodipicolinate + NADH + H(+). It carries out the reaction (S)-2,3,4,5-tetrahydrodipicolinate + NADP(+) + H2O = (2S,4S)-4-hydroxy-2,3,4,5-tetrahydrodipicolinate + NADPH + H(+). It participates in amino-acid biosynthesis; L-lysine biosynthesis via DAP pathway; (S)-tetrahydrodipicolinate from L-aspartate: step 4/4. In terms of biological role, catalyzes the conversion of 4-hydroxy-tetrahydrodipicolinate (HTPA) to tetrahydrodipicolinate. In Aliivibrio fischeri (strain ATCC 700601 / ES114) (Vibrio fischeri), this protein is 4-hydroxy-tetrahydrodipicolinate reductase.